Reading from the N-terminus, the 215-residue chain is Large ribosomal subunit protein uL3 (215 aa).

Low complexity predominate over residues 131 to 144 (SSSRASHGNSRSHN). Residues 131-150 (SSSRASHGNSRSHNVPGSIG) are disordered. The residue at position 153 (Q153) is an N5-methylglutamine.

Belongs to the universal ribosomal protein uL3 family. In terms of assembly, part of the 50S ribosomal subunit. Forms a cluster with proteins L14 and L19. In terms of processing, methylated by PrmB.

Its function is as follows. One of the primary rRNA binding proteins, it binds directly near the 3'-end of the 23S rRNA, where it nucleates assembly of the 50S subunit. The protein is Large ribosomal subunit protein uL3 of Nitrosomonas europaea (strain ATCC 19718 / CIP 103999 / KCTC 2705 / NBRC 14298).